We begin with the raw amino-acid sequence, 613 residues long: Dihydroxy-acid dehydratase (613 aa).

Mg(2+) is bound at residue Asp81. Cys122 is a binding site for [2Fe-2S] cluster. Mg(2+) is bound by residues Asp123 and Lys124. Lys124 carries the post-translational modification N6-carboxylysine. Residue Cys193 participates in [2Fe-2S] cluster binding. Residue Glu489 coordinates Mg(2+). Catalysis depends on Ser515, which acts as the Proton acceptor.

This sequence belongs to the IlvD/Edd family. As to quaternary structure, homodimer. [2Fe-2S] cluster serves as cofactor. It depends on Mg(2+) as a cofactor.

The enzyme catalyses (2R)-2,3-dihydroxy-3-methylbutanoate = 3-methyl-2-oxobutanoate + H2O. The catalysed reaction is (2R,3R)-2,3-dihydroxy-3-methylpentanoate = (S)-3-methyl-2-oxopentanoate + H2O. Its pathway is amino-acid biosynthesis; L-isoleucine biosynthesis; L-isoleucine from 2-oxobutanoate: step 3/4. It functions in the pathway amino-acid biosynthesis; L-valine biosynthesis; L-valine from pyruvate: step 3/4. Functionally, functions in the biosynthesis of branched-chain amino acids. Catalyzes the dehydration of (2R,3R)-2,3-dihydroxy-3-methylpentanoate (2,3-dihydroxy-3-methylvalerate) into 2-oxo-3-methylpentanoate (2-oxo-3-methylvalerate) and of (2R)-2,3-dihydroxy-3-methylbutanoate (2,3-dihydroxyisovalerate) into 2-oxo-3-methylbutanoate (2-oxoisovalerate), the penultimate precursor to L-isoleucine and L-valine, respectively. The chain is Dihydroxy-acid dehydratase from Pseudomonas putida (strain ATCC 700007 / DSM 6899 / JCM 31910 / BCRC 17059 / LMG 24140 / F1).